We begin with the raw amino-acid sequence, 264 residues long: Thymidylate synthase (264 aa).

Residue Arg-21 coordinates dUMP. His-51 contacts (6R)-5,10-methylene-5,6,7,8-tetrahydrofolate. 126–127 serves as a coordination point for dUMP; sequence RR. Residue Cys-146 is the Nucleophile of the active site. DUMP contacts are provided by residues 166–169, Asn-177, and 207–209; these read RSCD and HLY. Asp-169 provides a ligand contact to (6R)-5,10-methylene-5,6,7,8-tetrahydrofolate. Position 263 (Ala-263) interacts with (6R)-5,10-methylene-5,6,7,8-tetrahydrofolate.

The protein belongs to the thymidylate synthase family. Bacterial-type ThyA subfamily. In terms of assembly, homodimer.

It localises to the cytoplasm. The enzyme catalyses dUMP + (6R)-5,10-methylene-5,6,7,8-tetrahydrofolate = 7,8-dihydrofolate + dTMP. Its pathway is pyrimidine metabolism; dTTP biosynthesis. Its function is as follows. Catalyzes the reductive methylation of 2'-deoxyuridine-5'-monophosphate (dUMP) to 2'-deoxythymidine-5'-monophosphate (dTMP) while utilizing 5,10-methylenetetrahydrofolate (mTHF) as the methyl donor and reductant in the reaction, yielding dihydrofolate (DHF) as a by-product. This enzymatic reaction provides an intracellular de novo source of dTMP, an essential precursor for DNA biosynthesis. The polypeptide is Thymidylate synthase (Yersinia pestis bv. Antiqua (strain Antiqua)).